We begin with the raw amino-acid sequence, 317 residues long: Retinol dehydrogenase 16 (317 aa).

33–57 (FITGCDSGFGNLLARQLDRRGMRVL) is a binding site for NAD(+). Residue Ser164 participates in substrate binding. Tyr176 (proton acceptor) is an active-site residue. Residues 289-308 (FFYLPMSYLPTFLVDALFYW) form a helical membrane-spanning segment.

It belongs to the short-chain dehydrogenases/reductases (SDR) family. As to quaternary structure, homodimer. In terms of processing, not N-glycosylated. In terms of tissue distribution, liver &gt; kidney &gt; brain &gt; lung &gt; testis.

The protein localises to the microsome membrane. It localises to the endoplasmic reticulum membrane. It carries out the reaction all-trans-retinol--[retinol-binding protein] + NAD(+) = all-trans-retinal--[retinol-binding protein] + NADH + H(+). It catalyses the reaction all-trans-retinol + NAD(+) = all-trans-retinal + NADH + H(+). The enzyme catalyses 13-cis-retinol + NAD(+) = 13-cis-retinal + NADH + H(+). The catalysed reaction is 11-cis-retinol + NAD(+) = 11-cis-retinal + NADH + H(+). It carries out the reaction 9-cis-retinol + NAD(+) = 9-cis-retinal + NADH + H(+). It catalyses the reaction 5alpha-androstane-3alpha,17beta-diol + NAD(+) = 17beta-hydroxy-5alpha-androstan-3-one + NADH + H(+). The enzyme catalyses androsterone + NAD(+) = 5alpha-androstan-3,17-dione + NADH + H(+). It functions in the pathway cofactor metabolism; retinol metabolism. Functionally, oxidoreductase with a preference for NAD. Oxidizes all-trans-retinol, 9-cis-retinol, 11-cis-retinol and 13-cis-retinol to the corresponding aldehydes. Has higher activity towards CRBP-bound retinol than with free retinol. Oxidizes 3-alpha-hydroxysteroids. Oxidizes androstanediol and androsterone to dihydrotestosterone and androstanedione. Can also catalyze the reverse reaction. The polypeptide is Retinol dehydrogenase 16 (Rattus norvegicus (Rat)).